The sequence spans 330 residues: Taste receptor type 2 member 136 (330 aa).

The Extracellular segment spans residues 1-32 (MKSQPVTQELHFIFPLFKTISSDIMSFLVSIA). Residues 33-53 (GIAMLAQIVLGTFANVFIVLV) form a helical membrane-spanning segment. At 54–73 (TCTDCIRRRKLFLADGILTS) the chain is on the cytoplasmic side. A helical transmembrane segment spans residues 74 to 94 (LAFCRIGMLWVILISWCSIVF). Over 95-122 (HQALSLQVRFSICVGWAVTNHFNMWLAT) the chain is Extracellular. Residues 123-143 (ILSILYLLKIGNFSNLIFLGL) traverse the membrane as a helical segment. Over 144 to 149 (KRKIKS) the chain is Cytoplasmic. Residues 150 to 170 (VFIVVLLASLVLLFPNLITVT) form a helical membrane-spanning segment. At 171–201 (VCETVQANGYRGNLTGKTKRTYFMNLTAMIS) the chain is on the extracellular side. Residues Asn183 and Asn195 are each glycosylated (N-linked (GlcNAc...) asparagine). Residues 202–222 (FTLDNIISFTISMVCFLLLIY) traverse the membrane as a helical segment. At 223–248 (SLCKHLRTMRLYGKGPHNPSASAHIK) the chain is on the cytoplasmic side. A helical transmembrane segment spans residues 249–269 (ALQAVISFLLLFSMFILSLII). Residues 270 to 283 (SGYNYMKPLNEPVH) are Extracellular-facing. A helical membrane pass occupies residues 284-304 (LICQLIGTLYPSSHSYVLLWG). Residues 305–330 (NRRIKLAFVLAMVQVRARLWLKEEKP) are Cytoplasmic-facing.

This sequence belongs to the G-protein coupled receptor T2R family.

Its subcellular location is the membrane. Putative taste receptor which may play a role in the perception of bitterness. The polypeptide is Taste receptor type 2 member 136 (Rattus norvegicus (Rat)).